The following is a 311-amino-acid chain: Pyrimidine-specific ribonucleoside hydrolase RihA (311 aa).

His240 is an active-site residue.

This sequence belongs to the IUNH family. RihA subfamily.

Hydrolyzes cytidine or uridine to ribose and cytosine or uracil, respectively. This chain is Pyrimidine-specific ribonucleoside hydrolase RihA, found in Salmonella choleraesuis (strain SC-B67).